The primary structure comprises 512 residues: Glucagon-like peptide 2 receptor (512 aa).

The Extracellular segment spans residues 1 to 135 (MRRLWGPGTP…KQNVDHYHHT (135 aa)). Cystine bridges form between cysteine 43-cysteine 65, cysteine 56-cysteine 97, and cysteine 78-cysteine 119. N-linked (GlcNAc...) asparagine glycosylation is present at asparagine 73. Residues 136–160 (LLSTLQLMYTVGYSLSLISLFLALT) traverse the membrane as a helical segment. Residues 161–172 (LFLFLRKLHCTR) are Cytoplasmic-facing. The chain crosses the membrane as a helical span at residues 173 to 197 (NYIHMNLFASFILRALVVLVKDMVF). Over 198-223 (YNSYSRRPDSESGWMSYLSEISASCR) the chain is Extracellular. A helical membrane pass occupies residues 224–247 (SVQVLLHYFVGTNHLWLLVEGLYL). Residues 248–261 (HALLEPTVLPERRL) lie on the Cytoplasmic side of the membrane. Residues 262 to 283 (WPKYLVVGWAFPMLFVIPWIFV) traverse the membrane as a helical segment. The Extracellular segment spans residues 284–301 (RASLENTGCWAVNENKKI). A helical membrane pass occupies residues 302-324 (WWIIRGPILLCVTVNFFIFLKIL). At 325–348 (KLLISKFRAHQMCFRDYKYRLAKS) the chain is on the cytoplasmic side. A helical membrane pass occupies residues 349–367 (TLLLILLMGVHEFLFTFFT). Residues 368 to 379 (DDQVQGFSRLIR) are Extracellular-facing. The helical transmembrane segment at 380 to 400 (LFIQLTLSSFHGFLVALQYGF) threads the bilayer. The Cytoplasmic portion of the chain corresponds to 401-512 (ASREVKAELR…MEEILEESEI (112 aa)). The disordered stretch occupies residues 458–494 (SGVSSHLTAGNLRDHGAQPHRGRGAWPRASSLSESSE).

The protein belongs to the G-protein coupled receptor 2 family.

It is found in the cell membrane. In terms of biological role, this is a receptor for glucagon-like peptide 2. The activity of this receptor is mediated by G proteins which activate adenylyl cyclase. The protein is Glucagon-like peptide 2 receptor (Glp2r) of Mus musculus (Mouse).